We begin with the raw amino-acid sequence, 73 residues long: Putative sulfur carrier protein AF_0556 (73 aa).

The active-site Cysteine persulfide intermediate is the Cys11.

The protein belongs to the sulfur carrier protein TusA family.

This chain is Putative sulfur carrier protein AF_0556, found in Archaeoglobus fulgidus (strain ATCC 49558 / DSM 4304 / JCM 9628 / NBRC 100126 / VC-16).